The primary structure comprises 603 residues: UvrABC system protein C (603 aa).

Residues 13–92 enclose the GIY-YIG domain; the sequence is NGPGVYLMKD…IRKHKPRYNI (80 aa). In terms of domain architecture, UVR spans 202-237; sequence NDLLQKIKEQMAAASERQEYELAARLRDRMFAIQAT.

It belongs to the UvrC family. Interacts with UvrB in an incision complex.

It is found in the cytoplasm. Functionally, the UvrABC repair system catalyzes the recognition and processing of DNA lesions. UvrC both incises the 5' and 3' sides of the lesion. The N-terminal half is responsible for the 3' incision and the C-terminal half is responsible for the 5' incision. This chain is UvrABC system protein C, found in Desulfatibacillum aliphaticivorans.